A 1524-amino-acid polypeptide reads, in one-letter code: MSGDNSTETGRRRSRGAEASSRKDTLERLKAIRQGGIRSASGGGYDIRLQKPIFDTVDDEEYDALVSRRREEARGFVVEDGEGGDLGYLDEGEEEDWSKPSGPESTDESDDGGRFSGRLKKKKKGKEQTQQPQVKKVNPALKAAATITGEGRLSSMFTSSSFKKVKETDKAQYEGILDEIIAQVTPDESDRKKHTRRKLPGTVPVTIFKNKKLFSVASSMGMKESEPTPSTYEGDSVSMDNELMKEEDMKESEVIPSETMELLGSDIVKEDGSNKIRKTEVKSELGVKEVFTLNATIDMKEKDSALSATAGWKEAMGKVGTENGALLGSSSEGKTEFDLDADGSLRFFILDAYEEAFGASMGTIYLFGKVKMGDTYKSCCVVVKNIQRCVYAIPNDSIFPSHELIMLEQEVKDSRLSPESFRGKLHEMASKLKNEIAQELLQLNVSNFSMAPVKRNYAFERPDVPAGEQYVLKINYSFKDRPLPEDLKGESFSALLGSHTSALEHFILKRKIMGPCWLKISSFSTCSPSEGVSWCKFEVTVQSPKDITILVSEEKVVHPPAVVTAINLKTIVNEKQNISEIVSASVLCFHNAKIDVPMPAPERKRSGILSHFTVVRNPEGTGYPIGWKKEVSDRNSKNGCNVLSIENSERALLNRLFLELNKLDSDILVGHNISGFDLDVLLQRAQACKVQSSMWSKIGRLKRSFMPKLKGNSNYGSGATPGLMSCIAGRLLCDTDLCSRDLLKEVSYSLTDLSKTQLNRDRKEIAPNDIPKMFQSSKTLVELIECGETDAWLSMELMFHLSVLPLTLQLTNISGNLWGKTLQGARAQRIEYYLLHTFHSKKFILPDKISQRMKEIKSSKRRMDYAPEDRNVDELDADLTLENDPSKGSKTKKGPAYAGGLVLEPKRGLYDKYVLLLDFNSLYPSIIQEYNICFTTIPRSEDGVPRLPSSQTPGILPKLMEHLVSIRKSVKLKMKKETGLKYWELDIRQQALKLTANSMYGCLGFSNSRFYAKPLAELITLQGRDILQRTVDLVQNHLNLEVIYGDTDSIMIHSGLDDIEEVKAIKSKVIQEVNKKYRCLKIDCDGIYKRMLLLRKKKYAAVKLQFKDGKPCEDIERKGVDMVRRDWSLLSKEIGDLCLSKILYGGSCEDVVEAIHNELMKIKEEMRNGQVALEKYVITKTLTKPPAAYPDSKSQPHVQVALRMRQRGYKEGFNAKDTVPYIICYEQGNASSASSAGIAERARHPDEVKSEGSRWLVDIDYYLAQQIHPVVSRLCAEIQGTSPERLAECLGLDPSKYRSKSNDATSSDPSTSLLFATSDEERYKSCEPLALTCPSCSTAFNCPSIISSVCASISKKPATPETEESDSTFWLKLHCPKCQQEDSTGIISPAMIANQVKRQIDGFVSMYYKGIMVCEDESCKHTTRSPNFRLLGERERGTVCPNYPNCNGTLLRKYTEADLYKQLSYFCHILDTQCSLEKMDVGVRIQVEKAMTKIRPAVKSAAAITRSSRDRCAYGWMQLTDIVI.

Disordered stretches follow at residues 1–53 and 68–139; these read MSGD…QKPI and RRRE…KVNP. Residues 20–30 show a composition bias toward basic and acidic residues; the sequence is SSRKDTLERLK. The segment covering 79–96 has biased composition (acidic residues); sequence EDGEGGDLGYLDEGEEED. Zn(2+) contacts are provided by Cys1333, Cys1336, Cys1375, Cys1378, Cys1414, Cys1419, Cys1440, and Cys1446. The CysA-type zinc finger occupies 1333–1378; that stretch reads CPSCSTAFNCPSIISSVCASISKKPATPETEESDSTFWLKLHCPKC. The CysB motif signature appears at 1414-1446; the sequence is CEDESCKHTTRSPNFRLLGERERGTVCPNYPNC.

This sequence belongs to the DNA polymerase type-B family.

Its subcellular location is the nucleus. It carries out the reaction DNA(n) + a 2'-deoxyribonucleoside 5'-triphosphate = DNA(n+1) + diphosphate. In terms of biological role, polymerase alpha in a complex with DNA primase is a replicative polymerase. The chain is DNA polymerase alpha catalytic subunit (POLA) from Arabidopsis thaliana (Mouse-ear cress).